Here is a 159-residue protein sequence, read N- to C-terminus: Protransforming growth factor alpha (159 aa).

Residues 1–23 (MVPATGQLALLALGILLAVCQAL) form the signal peptide. Positions 24–38 (ENSTSPLSDSPVAAA) are cleaved as a propeptide — removed in mature form. Topologically, residues 24–97 (ENSTSPLSDS…AVVAASQKKQ (74 aa)) are extracellular. A glycan (N-linked (GlcNAc...) asparagine) is linked at Asn25. The 40-residue stretch at 44 to 83 (NKCPDSHTQYCFHGTCRFLVQEEKPACVCHSGYVGVRCEH) folds into the EGF-like domain. 3 disulfides stabilise this stretch: Cys46–Cys59, Cys54–Cys70, and Cys72–Cys81. Positions 89-159 (VVAASQKKQA…TACCHSETVV (71 aa)) are cleaved as a propeptide — removed in mature form. A helical membrane pass occupies residues 98-123 (AITALVVVSIVALAVLIITCVLIHCC). At 124–159 (QLRKHCEWCRALVCRHEKPSALLKGRTACCHSETVV) the chain is on the cytoplasmic side. Residues Cys152 and Cys153 are each lipidated (S-palmitoyl cysteine).

In terms of assembly, interacts with the PDZ domains of SDCBP and SNTA1. The interaction with SDCBP, is required for the targeting to the cell surface. In the endoplasmic reticulum, in its immature form (i.e. with a prosegment and lacking full N-glycosylation), interacts with CNIH. In the Golgi apparatus, may form a complex with CNIH and GORASP2. Interacts (via cytoplasmic C-terminal domain) with NKD2. Interacts with MAGI3.

Its subcellular location is the secreted. It localises to the extracellular space. It is found in the cell membrane. In terms of biological role, TGF alpha is a mitogenic polypeptide that is able to bind to the EGF receptor/EGFR and to act synergistically with TGF beta to promote anchorage-independent cell proliferation in soft agar. The sequence is that of Protransforming growth factor alpha (Tgfa) from Mus musculus (Mouse).